The sequence spans 252 residues: MISLNKLGVTYPNGTEALHNISIELNQGEFTVILGSSGAGKSTLLRCINFLTYPTSGKVIIEGNGDLNHPKILQKHRQRTGMIFQQHQLIPRQTALKNVLVGRLGYHSTLRSLFPLPKTDQYIALNCLERVGLLEKALTPVQALSGGQQQRVGIARALAQKPKFILADEPIASLDPASSHQVLSNLQKICQEDRIGALISLHQVDLALQYAQRIIGLGKGTILFDCNPSEIKKQQLEEIYQTLSYNPISKTI.

Residues 2 to 244 (ISLNKLGVTY…QLEEIYQTLS (243 aa)) enclose the ABC transporter domain. An ATP-binding site is contributed by 35–42 (GSSGAGKS).

Belongs to the ABC transporter superfamily. Phosphonates importer (TC 3.A.1.9.1) family. As to quaternary structure, the complex is composed of two ATP-binding proteins (PhnC), two transmembrane proteins (PhnE) and a solute-binding protein (PhnD).

The protein resides in the cell inner membrane. The catalysed reaction is phosphonate(out) + ATP + H2O = phosphonate(in) + ADP + phosphate + H(+). Part of the ABC transporter complex PhnCDE involved in phosphonates import. Responsible for energy coupling to the transport system. This Trichodesmium erythraeum (strain IMS101) protein is Phosphonates import ATP-binding protein PhnC 1.